The sequence spans 474 residues: Aspartyl/glutamyl-tRNA(Asn/Gln) amidotransferase subunit B (474 aa).

Belongs to the GatB/GatE family. GatB subfamily. Heterotrimer of A, B and C subunits.

It carries out the reaction L-glutamyl-tRNA(Gln) + L-glutamine + ATP + H2O = L-glutaminyl-tRNA(Gln) + L-glutamate + ADP + phosphate + H(+). It catalyses the reaction L-aspartyl-tRNA(Asn) + L-glutamine + ATP + H2O = L-asparaginyl-tRNA(Asn) + L-glutamate + ADP + phosphate + 2 H(+). Allows the formation of correctly charged Asn-tRNA(Asn) or Gln-tRNA(Gln) through the transamidation of misacylated Asp-tRNA(Asn) or Glu-tRNA(Gln) in organisms which lack either or both of asparaginyl-tRNA or glutaminyl-tRNA synthetases. The reaction takes place in the presence of glutamine and ATP through an activated phospho-Asp-tRNA(Asn) or phospho-Glu-tRNA(Gln). The protein is Aspartyl/glutamyl-tRNA(Asn/Gln) amidotransferase subunit B of Persephonella marina (strain DSM 14350 / EX-H1).